We begin with the raw amino-acid sequence, 187 residues long: Protein Flattop (187 aa).

The segment at 97-187 (THSGHGIHTH…TPQLEREEPQ (91 aa)) is disordered. Residues 122–131 (EGDQTCNAPT) show a composition bias toward polar residues. Residues 169-187 (KRREQSLEETPQLEREEPQ) are compositionally biased toward basic and acidic residues.

This sequence belongs to the Flattop family.

The protein localises to the cytoplasm. Its subcellular location is the cytoskeleton. The protein resides in the cilium basal body. It localises to the cell projection. It is found in the cilium. The protein localises to the apical cell membrane. Its subcellular location is the cilium axoneme. In terms of biological role, microtubule inner protein (MIP) part of the dynein-decorated doublet microtubules (DMTs) in cilia axoneme. Acts as a regulator of cilium basal body docking and positioning in mono- and multiciliated cells. Regulates basal body docking and cilia formation in multiciliated lung cells. Regulates kinocilium positioning and stereocilia bundle morphogenesis in the inner ear. The polypeptide is Protein Flattop (Salmo salar (Atlantic salmon)).